We begin with the raw amino-acid sequence, 329 residues long: DNA-directed RNA polymerase subunit alpha (329 aa).

The segment at 1–234 (MQGSVTEFLK…EQLDAFVELR (234 aa)) is alpha N-terminal domain (alpha-NTD). The interval 248–329 (FDPILLRPVD…WPPASLIDND (82 aa)) is alpha C-terminal domain (alpha-CTD).

It belongs to the RNA polymerase alpha chain family. Homodimer. The RNAP catalytic core consists of 2 alpha, 1 beta, 1 beta' and 1 omega subunit. When a sigma factor is associated with the core the holoenzyme is formed, which can initiate transcription.

It carries out the reaction RNA(n) + a ribonucleoside 5'-triphosphate = RNA(n+1) + diphosphate. Its function is as follows. DNA-dependent RNA polymerase catalyzes the transcription of DNA into RNA using the four ribonucleoside triphosphates as substrates. The polypeptide is DNA-directed RNA polymerase subunit alpha (Idiomarina loihiensis (strain ATCC BAA-735 / DSM 15497 / L2-TR)).